The sequence spans 170 residues: Large ribosomal subunit protein uL11 (170 aa).

This sequence belongs to the universal ribosomal protein uL11 family. As to quaternary structure, part of the ribosomal stalk of the 50S ribosomal subunit. Interacts with L10 and the large rRNA to form the base of the stalk. L10 forms an elongated spine to which L12 dimers bind in a sequential fashion forming a multimeric L10(L12)X complex.

Its function is as follows. Forms part of the ribosomal stalk which helps the ribosome interact with GTP-bound translation factors. The chain is Large ribosomal subunit protein uL11 from Saccharolobus islandicus (strain M.14.25 / Kamchatka #1) (Sulfolobus islandicus).